The following is a 312-amino-acid chain: Gamma-soluble NSF attachment protein (312 aa).

A disordered region spans residues 281–312 (KKKAAAPPQAKPEGTAAPAAEEEEDEYAGGLC). Low complexity predominate over residues 285-299 (AAPPQAKPEGTAAPA). A compositionally biased stretch (acidic residues) spans 300–312 (AEEEEDEYAGGLC).

It belongs to the SNAP family. As to quaternary structure, interacts with RAB11FIP5. Interacts with VTI1A.

It is found in the membrane. It localises to the golgi apparatus. In terms of biological role, required for vesicular transport between the endoplasmic reticulum and the Golgi apparatus. This chain is Gamma-soluble NSF attachment protein, found in Bos taurus (Bovine).